Reading from the N-terminus, the 498-residue chain is Guanosine-5'-triphosphate,3'-diphosphate pyrophosphatase (498 aa).

The protein belongs to the GppA/Ppx family. GppA subfamily.

It carries out the reaction guanosine 3'-diphosphate 5'-triphosphate + H2O = guanosine 3',5'-bis(diphosphate) + phosphate + H(+). It functions in the pathway purine metabolism; ppGpp biosynthesis; ppGpp from GTP: step 2/2. In terms of biological role, catalyzes the conversion of pppGpp to ppGpp. Guanosine pentaphosphate (pppGpp) is a cytoplasmic signaling molecule which together with ppGpp controls the 'stringent response', an adaptive process that allows bacteria to respond to amino acid starvation, resulting in the coordinated regulation of numerous cellular activities. In Pectobacterium carotovorum subsp. carotovorum (strain PC1), this protein is Guanosine-5'-triphosphate,3'-diphosphate pyrophosphatase.